The following is a 569-amino-acid chain: Serine/threonine-protein kinase gad8 (569 aa).

The segment at 19–63 (GLNSGGSSFTRGLKNSTLSSTSSRKSSDEKSRKSSEDKRSPQSTV) is disordered. A compositionally biased stretch (low complexity) spans 31 to 42 (LKNSTLSSTSSR). Residues 43–58 (KSSDEKSRKSSEDKRS) are compositionally biased toward basic and acidic residues. Positions 45–202 (SDEKSRKSSE…IVNKLTDEWV (158 aa)) constitute a C2 domain. The 256-residue stretch at 230 to 485 (FELLKVVGKG…AQEIKNHPFF (256 aa)) folds into the Protein kinase domain. ATP contacts are provided by residues 236-244 (VGKGSFGKV) and Lys259. Asp353 functions as the Proton acceptor in the catalytic mechanism. Thr387 carries the phosphothreonine; by ksg1 modification. The 72-residue stretch at 486–557 (DDIDWKKLCA…QRPTTIDTSD (72 aa)) folds into the AGC-kinase C-terminal domain. Phosphoserine; by TORC2 is present on residues Ser527 and Ser546.

It belongs to the protein kinase superfamily. AGC Ser/Thr protein kinase family. In terms of processing, phosphorylated by ksg1 and target of rapamycin complex 2 (TORC2), affecting the kinase activity of gad8 in a nutrient-dependent manner.

The catalysed reaction is L-seryl-[protein] + ATP = O-phospho-L-seryl-[protein] + ADP + H(+). The enzyme catalyses L-threonyl-[protein] + ATP = O-phospho-L-threonyl-[protein] + ADP + H(+). Functionally, involved in a signaling module for sexual development and cell growth under stressed conditions. Required for G1 arrest under nitrogen starvation and for growth at high temperature and osmolarity. In Schizosaccharomyces pombe (strain 972 / ATCC 24843) (Fission yeast), this protein is Serine/threonine-protein kinase gad8.